The sequence spans 135 residues: Ribonuclease VapC9 (135 aa).

The region spanning 15 to 118 is the PINc domain; the sequence is VVDTNVLMYV…LKRKAKQRGI (104 aa). Mg(2+)-binding residues include Asp-17 and Asp-88.

Belongs to the PINc/VapC protein family. As to quaternary structure, dimer. The cofactor is Mg(2+).

Its function is as follows. Toxic component of a type II toxin-antitoxin (TA) system. An RNase. The protein is Ribonuclease VapC9 of Archaeoglobus fulgidus (strain ATCC 49558 / DSM 4304 / JCM 9628 / NBRC 100126 / VC-16).